A 340-amino-acid chain; its full sequence is DNA-directed RNA polymerase subunit alpha (340 aa).

Residues 1–226 (MLIAQRPSLT…ELFGLARELN (226 aa)) are alpha N-terminal domain (alpha-NTD). Residues 243-340 (LAADLALPIE…DAGFVETEQY (98 aa)) are alpha C-terminal domain (alpha-CTD).

Belongs to the RNA polymerase alpha chain family. As to quaternary structure, homodimer. The RNAP catalytic core consists of 2 alpha, 1 beta, 1 beta' and 1 omega subunit. When a sigma factor is associated with the core the holoenzyme is formed, which can initiate transcription.

The enzyme catalyses RNA(n) + a ribonucleoside 5'-triphosphate = RNA(n+1) + diphosphate. Its function is as follows. DNA-dependent RNA polymerase catalyzes the transcription of DNA into RNA using the four ribonucleoside triphosphates as substrates. The chain is DNA-directed RNA polymerase subunit alpha from Streptomyces avermitilis (strain ATCC 31267 / DSM 46492 / JCM 5070 / NBRC 14893 / NCIMB 12804 / NRRL 8165 / MA-4680).